Reading from the N-terminus, the 262-residue chain is Phosphate import ATP-binding protein PstB (262 aa).

The ABC transporter domain occupies 16–257 (IDVRNLNFYY…PHRKETEDYI (242 aa)). Residue 48-55 (GPSGCGKS) coordinates ATP.

This sequence belongs to the ABC transporter superfamily. Phosphate importer (TC 3.A.1.7) family. As to quaternary structure, the complex is composed of two ATP-binding proteins (PstB), two transmembrane proteins (PstC and PstA) and a solute-binding protein (PstS).

The protein resides in the cell inner membrane. It catalyses the reaction phosphate(out) + ATP + H2O = ADP + 2 phosphate(in) + H(+). In terms of biological role, part of the ABC transporter complex PstSACB involved in phosphate import. Responsible for energy coupling to the transport system. The chain is Phosphate import ATP-binding protein PstB from Cupriavidus pinatubonensis (strain JMP 134 / LMG 1197) (Cupriavidus necator (strain JMP 134)).